Reading from the N-terminus, the 412-residue chain is Poly-beta-1,6-N-acetyl-D-glucosamine synthase (412 aa).

Transmembrane regions (helical) follow at residues 7–28 (LLFYPIFMSIYWIVGSIYYFFI), 298–320 (IASITWVYIVICYLSFLVITANI), 332–354 (IFFFSSFTMTFINIIQFTVALFI), and 364–386 (VGLIFLSWYPTLYWVINAAVVIM).

This sequence belongs to the glycosyltransferase 2 family.

Its subcellular location is the cell membrane. In terms of biological role, N-acetylglucosaminyltransferase that catalyzes the polymerization of single monomer units of UDP-N-acetylglucosamine to produce the linear homomer poly-beta-1,6-N-acetyl-D-glucosamine (PNAG, also referred to as PIA), a biofilm adhesin polysaccharide. Requires IcaD for full activity. In Staphylococcus epidermidis, this protein is Poly-beta-1,6-N-acetyl-D-glucosamine synthase (icaA).